The primary structure comprises 298 residues: Mitochondrial intermembrane space import and assembly protein 40 (298 aa).

A mitochondrion-targeting transit peptide spans 1–33 (MYRTALRPSQSALRAIRSTTSPSALVSSGARRF). Topologically, residues 34-52 (ASTTSAPKKKSTWKGAAVR) are mitochondrial matrix. The helical; Signal-anchor for type II membrane protein transmembrane segment at 53–69 (WGLAVAAVYYYNTSPIF) threads the bilayer. Over 70 to 298 (SDELPETAGT…TAANNNKKQQ (229 aa)) the chain is Mitochondrial intermembrane. Residues 101–159 (RQAAEHAAARKAAQAAAKAAATPATPSESVEEQITKAEAEAEAVPEGDSKPRSESTEGV) form a disordered region. Low complexity predominate over residues 110–121 (RKAAQAAAKAAA). Disulfide bonds link Cys-191–Cys-193, Cys-202–Cys-235, and Cys-212–Cys-225. Residues 199 to 243 (HGPCGEEFKAAFSCFVYSTEEPKGMDCIEKFSHMQDCFRKYPEVY) enclose the CHCH domain. 2 consecutive short sequence motifs (cx9C motif) follow at residues 202–212 (CGEEFKAAFSC) and 225–235 (CIEKFSHMQDC). Positions 248–298 (ADDEEAERASAAAPAAEGTPAKEEPVENKKEEALEPATHDATAANNNKKQQ) are disordered. Low complexity predominate over residues 256 to 266 (ASAAAPAAEGT). The span at 267 to 280 (PAKEEPVENKKEEA) shows a compositional bias: basic and acidic residues.

As to quaternary structure, monomer. Cu(2+) serves as cofactor. The cofactor is Zn(2+).

The protein resides in the mitochondrion inner membrane. Functionally, required for the import and folding of small cysteine-containing proteins (small Tim) in the mitochondrial intermembrane space (IMS). Forms a redox cycle with ERV1 that involves a disulfide relay system. Precursor proteins to be imported into the IMS are translocated in their reduced form into the mitochondria. The oxidized form of MIA40 forms a transient intermolecular disulfide bridge with the reduced precursor protein, resulting in oxidation of the precursor protein that now contains an intramolecular disulfide bond and is able to undergo folding in the IMS. The protein is Mitochondrial intermembrane space import and assembly protein 40 (mia-40) of Neurospora crassa (strain ATCC 24698 / 74-OR23-1A / CBS 708.71 / DSM 1257 / FGSC 987).